Reading from the N-terminus, the 324-residue chain is uncharacterized protein (324 aa).

Positions 1 to 58 constitute an HTH lysR-type domain; that stretch reads MDIKVMEYAAEIARRQSFTKAAEHLHIAQPSLSQQIKKLEAELGLTLFHRSHGSVTLT. A DNA-binding region (H-T-H motif) is located at residues 18-37; sequence FTKAAEHLHIAQPSLSQQIK.

The protein belongs to the LysR transcriptional regulatory family.

This is an uncharacterized protein from Bacillus subtilis (strain 168).